The primary structure comprises 285 residues: MTQIIDGKALAAKLQGQLAEKTAKLKEETGLVPGLVVILVGDNPASQVYVRNKERSALAAGFRSEVVRVPETITQEELLDLIAKYNQDPAWHGILVQLPLPKHIDEEAVLLAIDPEKDVDGFHPLNMGRLWSGHPVMIPSTPAGIMEMFHEYGIDLEGKNAVVIGRSNIVGKPMAQLLLAKNATVTLTHSRTHNLSKVAAKADILVVAIGRAKFVTADFVKPGAVVIDVGMNRDENGKLCGDVDYEAVAPLASHITPVPGGVGPMTITMLMEQTYQAALRTLDRK.

NADP(+)-binding positions include 165–167 and serine 190; that span reads GRS.

Belongs to the tetrahydrofolate dehydrogenase/cyclohydrolase family. As to quaternary structure, homodimer.

It catalyses the reaction (6R)-5,10-methylene-5,6,7,8-tetrahydrofolate + NADP(+) = (6R)-5,10-methenyltetrahydrofolate + NADPH. The enzyme catalyses (6R)-5,10-methenyltetrahydrofolate + H2O = (6R)-10-formyltetrahydrofolate + H(+). It participates in one-carbon metabolism; tetrahydrofolate interconversion. Functionally, catalyzes the oxidation of 5,10-methylenetetrahydrofolate to 5,10-methenyltetrahydrofolate and then the hydrolysis of 5,10-methenyltetrahydrofolate to 10-formyltetrahydrofolate. The protein is Bifunctional protein FolD of Streptococcus pneumoniae serotype 4 (strain ATCC BAA-334 / TIGR4).